The sequence spans 211 residues: Redox-sensing transcriptional repressor Rex (211 aa).

The segment at residues 13-52 (TYLRILEELEAQGVHRTSSEQLGELAQVTAFQVRKDLSYF) is a DNA-binding region (H-T-H motif). Residue 87 to 92 (GMGRLG) coordinates NAD(+).

The protein belongs to the transcriptional regulatory Rex family. As to quaternary structure, homodimer.

The protein resides in the cytoplasm. Functionally, modulates transcription in response to changes in cellular NADH/NAD(+) redox state. In Thermus aquaticus, this protein is Redox-sensing transcriptional repressor Rex.